A 40-amino-acid polypeptide reads, in one-letter code: Meleagrin (40 aa).

Position 1 is a pyrrolidone carboxylic acid (Q1). Disulfide bonds link C6–C33, C12–C28, and C16–C32.

Belongs to the transferrin family.

This is Meleagrin from Meleagris gallopavo (Wild turkey).